Consider the following 408-residue polypeptide: MKRTIILMLDSLGIGASADAVRFGDEGANTLGHIAQACVTGNADNGRKGPLTLPNLTRLGLAHACAASCGEFPAGLDASVTPIAAYGYARELSSGKDTPSGHWEMAGAPVLFDWGYFTDKQNSFPPELLDALVAQGNLPGYLGNCHASGTEILDRLGEEHMRSGKPIFYTSADSVFQIACHEETYGLDKLYELCKLARQLLEPYNIGRVIARPFVGSKAGEFKRTGNRHDYAVEPPMPTLLDRMKAAGGDVISIGKIADIYACCGITQQHKATGLDELWDMTLAQVKTAADQSIIFTNFVDFDSSYGHRRDVAGYAAALEYFDSRLPELLALLLPGDRVVLTADHGCDPIWTGTDHTREHVPVIFYGDTVQPQDLGMRDTFADIGQTIAAYHGLPVLDYGSNCLPEHH.

The Mn(2+) site is built by Asp10, Asp303, His308, Asp344, His345, and His356.

Belongs to the phosphopentomutase family. It depends on Mn(2+) as a cofactor.

Its subcellular location is the cytoplasm. The catalysed reaction is 2-deoxy-alpha-D-ribose 1-phosphate = 2-deoxy-D-ribose 5-phosphate. It carries out the reaction alpha-D-ribose 1-phosphate = D-ribose 5-phosphate. It participates in carbohydrate degradation; 2-deoxy-D-ribose 1-phosphate degradation; D-glyceraldehyde 3-phosphate and acetaldehyde from 2-deoxy-alpha-D-ribose 1-phosphate: step 1/2. Functionally, isomerase that catalyzes the conversion of deoxy-ribose 1-phosphate (dRib-1-P) and ribose 1-phosphate (Rib-1-P) to deoxy-ribose 5-phosphate (dRib-5-P) and ribose 5-phosphate (Rib-5-P), respectively. The sequence is that of Phosphopentomutase from Tolumonas auensis (strain DSM 9187 / NBRC 110442 / TA 4).